Reading from the N-terminus, the 418-residue chain is LL-diaminopimelate aminotransferase (418 aa).

2 residues coordinate substrate: tyrosine 25 and glycine 52. Residues tyrosine 78, 115–116, tyrosine 140, asparagine 190, tyrosine 221, and 248–250 contribute to the pyridoxal 5'-phosphate site; these read SK and SFS. Residues lysine 116, tyrosine 140, and asparagine 190 each contribute to the substrate site. Lysine 251 carries the N6-(pyridoxal phosphate)lysine modification. A pyridoxal 5'-phosphate-binding site is contributed by arginine 259.

It belongs to the class-I pyridoxal-phosphate-dependent aminotransferase family. As to quaternary structure, homodimer. Pyridoxal 5'-phosphate is required as a cofactor.

It is found in the cytoplasm. The enzyme catalyses (2S,6S)-2,6-diaminopimelate + 2-oxoglutarate = (S)-2,3,4,5-tetrahydrodipicolinate + L-glutamate + H2O + H(+). The protein operates within amino-acid biosynthesis; L-lysine biosynthesis via DAP pathway; LL-2,6-diaminopimelate from (S)-tetrahydrodipicolinate (aminotransferase route): step 1/1. Involved in the synthesis of meso-diaminopimelate (m-DAP or DL-DAP), required for both lysine and peptidoglycan biosynthesis. Catalyzes the direct conversion of tetrahydrodipicolinate to LL-diaminopimelate, a reaction that requires three enzymes in E.coli. The protein is LL-diaminopimelate aminotransferase (dapL) of Methanocaldococcus jannaschii (strain ATCC 43067 / DSM 2661 / JAL-1 / JCM 10045 / NBRC 100440) (Methanococcus jannaschii).